The chain runs to 208 residues: V-type ATP synthase subunit D (208 aa).

Belongs to the V-ATPase D subunit family.

Produces ATP from ADP in the presence of a proton gradient across the membrane. The chain is V-type ATP synthase subunit D from Streptococcus pyogenes serotype M49 (strain NZ131).